The following is a 123-amino-acid chain: Small ribosomal subunit protein uS12cz/uS12cy (123 aa).

The protein belongs to the universal ribosomal protein uS12 family. As to quaternary structure, part of the 30S ribosomal subunit.

The protein localises to the plastid. Its subcellular location is the chloroplast. In terms of biological role, with S4 and S5 plays an important role in translational accuracy. Located at the interface of the 30S and 50S subunits. The sequence is that of Small ribosomal subunit protein uS12cz/uS12cy (rps12-A) from Glycine max (Soybean).